The following is a 30-amino-acid chain: Trypsin inhibitor 4 (30 aa).

Disulfide bonds link C3-C20, C10-C22, and C16-C29.

It belongs to the protease inhibitor I7 (squash-type serine protease inhibitor) family.

It localises to the secreted. Inhibits trypsin. This is Trypsin inhibitor 4 from Cucumis sativus (Cucumber).